The primary structure comprises 214 residues: Putative nickel/cobalt efflux system MJ1092 (214 aa).

6 consecutive transmembrane segments (helical) span residues 2 to 22, 46 to 66, 79 to 99, 116 to 136, 149 to 169, and 188 to 208; these read VMIMELLYAITAFILGMLHAL, ILLGTTITISHTAVIFLLGIL, VHDMMSVVGGLILIAVGIWII, VITLGLSAGLVPCPAALAVLL, IYVAIFSIGLAISLTGLAVAF, and LPLISGSIIILIGLYTIAHPI.

The protein belongs to the NiCoT transporter (TC 2.A.52) family.

It localises to the cell membrane. Efflux system for nickel and cobalt. The polypeptide is Putative nickel/cobalt efflux system MJ1092 (Methanocaldococcus jannaschii (strain ATCC 43067 / DSM 2661 / JAL-1 / JCM 10045 / NBRC 100440) (Methanococcus jannaschii)).